We begin with the raw amino-acid sequence, 361 residues long: Chorismate synthase (361 aa).

Positions 48 and 54 each coordinate NADP(+). FMN contacts are provided by residues 125-127 (RSS), 238-239 (NA), Gly278, 293-297 (KPTSS), and Arg319.

Belongs to the chorismate synthase family. As to quaternary structure, homotetramer. Requires FMNH2 as cofactor.

It carries out the reaction 5-O-(1-carboxyvinyl)-3-phosphoshikimate = chorismate + phosphate. The protein operates within metabolic intermediate biosynthesis; chorismate biosynthesis; chorismate from D-erythrose 4-phosphate and phosphoenolpyruvate: step 7/7. In terms of biological role, catalyzes the anti-1,4-elimination of the C-3 phosphate and the C-6 proR hydrogen from 5-enolpyruvylshikimate-3-phosphate (EPSP) to yield chorismate, which is the branch point compound that serves as the starting substrate for the three terminal pathways of aromatic amino acid biosynthesis. This reaction introduces a second double bond into the aromatic ring system. The sequence is that of Chorismate synthase from Vibrio vulnificus (strain YJ016).